The primary structure comprises 1096 residues: DNA-directed RNA polymerase subunit beta (1096 aa).

The segment at 1069-1096 is disordered; sequence DLMQDVNPRRSTPSRPTYESLGSDYQED.

This sequence belongs to the RNA polymerase beta chain family. In cyanobacteria the RNAP catalytic core is composed of 2 alpha, 1 beta, 1 beta', 1 gamma and 1 omega subunit. When a sigma factor is associated with the core the holoenzyme is formed, which can initiate transcription.

It carries out the reaction RNA(n) + a ribonucleoside 5'-triphosphate = RNA(n+1) + diphosphate. Functionally, DNA-dependent RNA polymerase catalyzes the transcription of DNA into RNA using the four ribonucleoside triphosphates as substrates. This is DNA-directed RNA polymerase subunit beta from Prochlorococcus marinus (strain SARG / CCMP1375 / SS120).